We begin with the raw amino-acid sequence, 314 residues long: Acetaldehyde dehydrogenase 3 (314 aa).

The active-site Acyl-thioester intermediate is the Cys132. NAD(+) is bound by residues 163–171 (SAGPGTRAN) and Asn291.

Belongs to the acetaldehyde dehydrogenase family.

The catalysed reaction is acetaldehyde + NAD(+) + CoA = acetyl-CoA + NADH + H(+). This Dechloromonas aromatica (strain RCB) protein is Acetaldehyde dehydrogenase 3.